The primary structure comprises 350 residues: S-adenosylmethionine:tRNA ribosyltransferase-isomerase (350 aa).

The protein belongs to the QueA family. Monomer.

The protein localises to the cytoplasm. The catalysed reaction is 7-aminomethyl-7-carbaguanosine(34) in tRNA + S-adenosyl-L-methionine = epoxyqueuosine(34) in tRNA + adenine + L-methionine + 2 H(+). It participates in tRNA modification; tRNA-queuosine biosynthesis. Its function is as follows. Transfers and isomerizes the ribose moiety from AdoMet to the 7-aminomethyl group of 7-deazaguanine (preQ1-tRNA) to give epoxyqueuosine (oQ-tRNA). This Parvibaculum lavamentivorans (strain DS-1 / DSM 13023 / NCIMB 13966) protein is S-adenosylmethionine:tRNA ribosyltransferase-isomerase.